The primary structure comprises 230 residues: CASP-like protein 2A2 (230 aa).

Residues 1–23 (MEKKDEGNPPMAVMGSRDENEDV) form a disordered region. Over 1–29 (MEKKDEGNPPMAVMGSRDENEDVKSTMRT) the chain is Cytoplasmic. The helical transmembrane segment at 30 to 50 (AETMLRLVPVALCVSALVVML) threads the bilayer. Residues 51-71 (KNTQTNDYGSLSYSDLGAFRY) lie on the Extracellular side of the membrane. The chain crosses the membrane as a helical span at residues 72–92 (LVNANGICAGYSLLSAVIVAM). Residues 93–100 (PRAWTMPQ) are Cytoplasmic-facing. The chain crosses the membrane as a helical span at residues 101–121 (AWTFFLLDQVLTYVILAAGTV). Residues 122-151 (STEVLYLANKGDTSIAWSAACASFGGFCHK) are Extracellular-facing. Residues 152 to 172 (ALISTVITFVAVIFYAALSLV) form a helical membrane-spanning segment. The Cytoplasmic portion of the chain corresponds to 173–230 (SSYKLFSKYDAPVVTQSGEGIKTVTLGSPPPPPPPPPSNLHLHLHAKLACPAHNNSPN).

This sequence belongs to the Casparian strip membrane proteins (CASP) family. As to quaternary structure, homodimer and heterodimers.

Its subcellular location is the cell membrane. This chain is CASP-like protein 2A2, found in Populus trichocarpa (Western balsam poplar).